A 37-amino-acid chain; its full sequence is Large ribosomal subunit protein bL36c (37 aa).

This sequence belongs to the bacterial ribosomal protein bL36 family.

The protein resides in the plastid. It localises to the chloroplast. This is Large ribosomal subunit protein bL36c from Phaseolus angularis (Azuki bean).